The sequence spans 205 residues: uncharacterized protein (205 aa).

An HD domain is found at 26 to 129 (DWHHVSRVAD…VQDADRLDAI (104 aa)).

This is an uncharacterized protein from Bacillus subtilis (strain 168).